The chain runs to 142 residues: Hemoglobin subunit alpha (142 aa).

Residues 2–142 enclose the Globin domain; the sequence is VLSANDKSNV…VGNVLTSKYR (141 aa). Residue His59 coordinates O2. His88 provides a ligand contact to heme b.

Belongs to the globin family. In terms of assembly, heterotetramer of two alpha chains and two beta chains. Red blood cells.

Functionally, involved in oxygen transport from the lung to the various peripheral tissues. The chain is Hemoglobin subunit alpha (HBA) from Aptenodytes forsteri (Emperor penguin).